A 481-amino-acid chain; its full sequence is ATP synthase subunit beta, chloroplastic (481 aa).

162 to 169 (GGAGVGKT) contacts ATP.

This sequence belongs to the ATPase alpha/beta chains family. In terms of assembly, F-type ATPases have 2 components, CF(1) - the catalytic core - and CF(0) - the membrane proton channel. CF(1) has five subunits: alpha(3), beta(3), gamma(1), delta(1), epsilon(1). CF(0) has four main subunits: a(1), b(1), b'(1) and c(9-12).

Its subcellular location is the plastid. The protein resides in the chloroplast thylakoid membrane. The catalysed reaction is ATP + H2O + 4 H(+)(in) = ADP + phosphate + 5 H(+)(out). Functionally, produces ATP from ADP in the presence of a proton gradient across the membrane. The catalytic sites are hosted primarily by the beta subunits. In Oltmannsiellopsis viridis (Marine flagellate), this protein is ATP synthase subunit beta, chloroplastic.